The following is a 572-amino-acid chain: Proline--tRNA ligase (572 aa).

It belongs to the class-II aminoacyl-tRNA synthetase family. ProS type 1 subfamily. Homodimer.

Its subcellular location is the cytoplasm. It carries out the reaction tRNA(Pro) + L-proline + ATP = L-prolyl-tRNA(Pro) + AMP + diphosphate. Catalyzes the attachment of proline to tRNA(Pro) in a two-step reaction: proline is first activated by ATP to form Pro-AMP and then transferred to the acceptor end of tRNA(Pro). As ProRS can inadvertently accommodate and process non-cognate amino acids such as alanine and cysteine, to avoid such errors it has two additional distinct editing activities against alanine. One activity is designated as 'pretransfer' editing and involves the tRNA(Pro)-independent hydrolysis of activated Ala-AMP. The other activity is designated 'posttransfer' editing and involves deacylation of mischarged Ala-tRNA(Pro). The misacylated Cys-tRNA(Pro) is not edited by ProRS. The protein is Proline--tRNA ligase of Salmonella schwarzengrund (strain CVM19633).